A 329-amino-acid chain; its full sequence is 4-hydroxythreonine-4-phosphate dehydrogenase (329 aa).

Positions 136 and 137 each coordinate substrate. Residues His166, His211, and His266 each coordinate a divalent metal cation. Substrate is bound by residues Lys274, Asn283, and Arg292.

Belongs to the PdxA family. In terms of assembly, homodimer. Requires Zn(2+) as cofactor. It depends on Mg(2+) as a cofactor. Co(2+) serves as cofactor.

It is found in the cytoplasm. The enzyme catalyses 4-(phosphooxy)-L-threonine + NAD(+) = 3-amino-2-oxopropyl phosphate + CO2 + NADH. It functions in the pathway cofactor biosynthesis; pyridoxine 5'-phosphate biosynthesis; pyridoxine 5'-phosphate from D-erythrose 4-phosphate: step 4/5. Catalyzes the NAD(P)-dependent oxidation of 4-(phosphooxy)-L-threonine (HTP) into 2-amino-3-oxo-4-(phosphooxy)butyric acid which spontaneously decarboxylates to form 3-amino-2-oxopropyl phosphate (AHAP). This Escherichia coli O7:K1 (strain IAI39 / ExPEC) protein is 4-hydroxythreonine-4-phosphate dehydrogenase.